Reading from the N-terminus, the 256-residue chain is Ribonuclease 3 (256 aa).

In terms of domain architecture, RNase III spans 3 to 125 (LDALQQRLGY…IVGAVFLDAG (123 aa)). E38 is a Mg(2+) binding site. Residue D42 is part of the active site. Mg(2+) is bound by residues D111 and E114. The active site involves E114. The region spanning 152-222 (DAKTLLQEYL…AKLALDEVQK (71 aa)) is the DRBM domain. A disordered region spans residues 230-256 (RSRAERTGKTRKQPVPQDPQLSLRLKE).

The protein belongs to the ribonuclease III family. In terms of assembly, homodimer. Mg(2+) serves as cofactor.

The protein localises to the cytoplasm. The catalysed reaction is Endonucleolytic cleavage to 5'-phosphomonoester.. Its function is as follows. Digests double-stranded RNA. Involved in the processing of primary rRNA transcript to yield the immediate precursors to the large and small rRNAs (23S and 16S). Processes some mRNAs, and tRNAs when they are encoded in the rRNA operon. Processes pre-crRNA and tracrRNA of type II CRISPR loci if present in the organism. The chain is Ribonuclease 3 from Cupriavidus necator (strain ATCC 17699 / DSM 428 / KCTC 22496 / NCIMB 10442 / H16 / Stanier 337) (Ralstonia eutropha).